A 139-amino-acid chain; its full sequence is Small ribosomal subunit protein uS12 (139 aa).

Residues 1–55 (MPTINQLIRKGRKAKVKKSDSPALNKGYNSFKKVQTDLSSPQKRGVCTRVGTMTP) form a disordered region. Polar residues predominate over residues 32 to 42 (KKVQTDLSSPQ).

This sequence belongs to the universal ribosomal protein uS12 family. Part of the 30S ribosomal subunit. Contacts proteins S8 and S17. May interact with IF1 in the 30S initiation complex.

In terms of biological role, with S4 and S5 plays an important role in translational accuracy. Its function is as follows. Interacts with and stabilizes bases of the 16S rRNA that are involved in tRNA selection in the A site and with the mRNA backbone. Located at the interface of the 30S and 50S subunits, it traverses the body of the 30S subunit contacting proteins on the other side and probably holding the rRNA structure together. The combined cluster of proteins S8, S12 and S17 appears to hold together the shoulder and platform of the 30S subunit. The chain is Small ribosomal subunit protein uS12 from Halalkalibacterium halodurans (strain ATCC BAA-125 / DSM 18197 / FERM 7344 / JCM 9153 / C-125) (Bacillus halodurans).